A 208-amino-acid polypeptide reads, in one-letter code: MKLVEVKHPLVKHKLGLMRAADVSTKHFRELATEVGSLLTYEATADLETEIVTIEGWCGPVEVQRIKGKKVTVVPILRAGLGMMDGVLEHIPSARISVVGMYRDEETLEPVPYFQKLASDIEERLAIVVDPMLATGGSMIATIDLLKQKGCKHIKVLVLVAAPEGIKALESAHPDIELYTASIDDHLNQDGYIIPGLGDAGDKIFGTK.

Residues Arg78, Arg103, and 130-138 (DPMLATGGS) contribute to the 5-phospho-alpha-D-ribose 1-diphosphate site. Residues Ile193 and 198-200 (GDA) contribute to the uracil site. Residue Asp199 participates in 5-phospho-alpha-D-ribose 1-diphosphate binding.

It belongs to the UPRTase family. Mg(2+) is required as a cofactor.

The catalysed reaction is UMP + diphosphate = 5-phospho-alpha-D-ribose 1-diphosphate + uracil. The protein operates within pyrimidine metabolism; UMP biosynthesis via salvage pathway; UMP from uracil: step 1/1. Allosterically activated by GTP. Catalyzes the conversion of uracil and 5-phospho-alpha-D-ribose 1-diphosphate (PRPP) to UMP and diphosphate. The protein is Uracil phosphoribosyltransferase of Mannheimia succiniciproducens (strain KCTC 0769BP / MBEL55E).